We begin with the raw amino-acid sequence, 712 residues long: Lactoperoxidase (712 aa).

The first 22 residues, methionine 1–serine 22, serve as a signal peptide directing secretion. Residues aspartate 23 to arginine 100 constitute a propeptide that is removed on maturation. The N-linked (GlcNAc...) (complex) asparagine; alternate glycan is linked to asparagine 106. Asparagine 106 carries an N-linked (GlcNAc...) (hybrid) asparagine; alternate glycan. 4 disulfides stabilise this stretch: cysteine 123–cysteine 284, cysteine 132–cysteine 145, cysteine 246–cysteine 256, and cysteine 250–cysteine 274. N-linked (GlcNAc...) (complex) asparagine; alternate glycosylation occurs at asparagine 212. The N-linked (GlcNAc...) (high mannose) asparagine; alternate glycan is linked to asparagine 212. Aspartate 225 provides a ligand contact to heme b. The active-site Proton acceptor is histidine 226. Aspartate 227 contacts Ca(2+). Ca(2+) contacts are provided by threonine 301, phenylalanine 303, aspartate 305, and serine 307. The residue at position 315 (serine 315) is a Phosphoserine. An N-linked (GlcNAc...) (high mannose) asparagine glycan is attached at asparagine 322. Cysteine 354 and cysteine 365 are joined by a disulfide. An N-linked (GlcNAc...) asparagine glycan is attached at asparagine 358. Glutamate 375 contributes to the heme b binding site. N-linked (GlcNAc...) (complex) asparagine; alternate glycosylation is present at asparagine 449. An N-linked (GlcNAc...) (hybrid) asparagine; alternate glycan is attached at asparagine 449. N-linked (GlcNAc...) (high mannose) asparagine; alternate glycosylation occurs at asparagine 449. Histidine 468 is a heme b binding site. Position 482 is a 3'-nitrotyrosine (tyrosine 482). 2 disulfides stabilise this stretch: cysteine 573-cysteine 630 and cysteine 671-cysteine 696.

Belongs to the peroxidase family. XPO subfamily. Requires Ca(2+) as cofactor. Heme b is required as a cofactor. Mammary gland; milk.

The protein localises to the secreted. Its subcellular location is the cytoplasm. It catalyses the reaction 2 a phenolic donor + H2O2 = 2 a phenolic radical donor + 2 H2O. The catalysed reaction is thiocyanate + H2O2 + H(+) = hypothiocyanous acid + H2O. The enzyme catalyses iodide + H2O2 = hypoiodite + H2O. Functionally, heme-containing oxidoreductase which catalyzes the conversion of thiocyanate (SCN(-)) into antimicrobial agent hypothiocyanous acid (OSCN(-)) in the presence of hydrogen peroxide (H2O2). Also involved in the conversion of iodide (I(-)) into hypoiodite (IO(-)) in the presence of H2O2. Responsible for the inactivation of a wide range of micro-organisms and hence, important component of defense mechanism. Shows antibacterial properties against E.coli, K.pneumoniae, P.aeruginosa, S.sonnei, S.saphrophyticus, S.epidermidis and S.dysenteriae. May protect the udder from infection and may promote growth in newborns. May be implicated in airway host defense against infection. May contribute to maintaining an appropriate H2O2 cellular level, therefore protecting cells from H2O2-caused injuries and inflammation. The protein is Lactoperoxidase of Bubalus bubalis (Domestic water buffalo).